Reading from the N-terminus, the 484-residue chain is MHEKTIAELSAALTKGECSSVELTEHFLKRIEALDGGLNSFVTVTAEQALAQAKAADDRRARGEAGPLTGVPMAQKDIFCTDGVRTTCGSKMLDNFIAPYDATVVERFKAEGCPMLGKTNMDEFAMGSSNETSFHGPVKNPWDTARVPGGSSGGSAAAVAARLTPSATGTDTGGSIRQPAALCGITGLKPTYGRVSRWGMIAFASSLDQGGPMAATAEDCALLANVMSGFDPRDSTSIERPAEDFTARLNEPLKGLRIGLPREFFGEGLDAGVAKAVDEAIEQYKQLGAEVKEVGLPNSGLSVPAYYVVAPAECSSNLARFDGVRYGYRCENPKDLMDLYTRSRGEGFGAEVKRRIMVGTYALSAGYFDAYYLKAQKIRRLIADDFARAFEEVDVILGPTSPSTAFRLGEKTDDPVTMYLSDIYTIAVNLAGLPGMSIPAGFSDGLPVGLQLIGNYFDEARLLGVAHQYQSVTDWHRRIPKGFE.

Residues K76 and S151 each act as charge relay system in the active site. The active-site Acyl-ester intermediate is S175.

It belongs to the amidase family. GatA subfamily. Heterotrimer of A, B and C subunits.

It carries out the reaction L-glutamyl-tRNA(Gln) + L-glutamine + ATP + H2O = L-glutaminyl-tRNA(Gln) + L-glutamate + ADP + phosphate + H(+). Its function is as follows. Allows the formation of correctly charged Gln-tRNA(Gln) through the transamidation of misacylated Glu-tRNA(Gln) in organisms which lack glutaminyl-tRNA synthetase. The reaction takes place in the presence of glutamine and ATP through an activated gamma-phospho-Glu-tRNA(Gln). This Thioalkalivibrio sulfidiphilus (strain HL-EbGR7) protein is Glutamyl-tRNA(Gln) amidotransferase subunit A.